An 810-amino-acid polypeptide reads, in one-letter code: Lon protease (810 aa).

Positions 40 to 233 (LIIVPVRGFV…MVAKLLAQRI (194 aa)) constitute a Lon N-terminal domain. 385–392 (GPPGVGKT) serves as a coordination point for ATP. Positions 621–802 (LSVPGVATGL…DDAMAAAFEG (182 aa)) constitute a Lon proteolytic domain. Residues Ser-708 and Lys-751 contribute to the active site.

Belongs to the peptidase S16 family. As to quaternary structure, homohexamer. Organized in a ring with a central cavity.

The protein resides in the cytoplasm. The enzyme catalyses Hydrolysis of proteins in presence of ATP.. Its function is as follows. ATP-dependent serine protease that mediates the selective degradation of mutant and abnormal proteins as well as certain short-lived regulatory proteins. Required for cellular homeostasis and for survival from DNA damage and developmental changes induced by stress. Degrades polypeptides processively to yield small peptide fragments that are 5 to 10 amino acids long. Binds to DNA in a double-stranded, site-specific manner. This Methylocella silvestris (strain DSM 15510 / CIP 108128 / LMG 27833 / NCIMB 13906 / BL2) protein is Lon protease.